The sequence spans 740 residues: Dipeptidyl peptidase family member 6 (740 aa).

Position 1 (methionine 1) is a topological domain, cytoplasmic. Residues 2–22 (LFLPILILNLLIITHAIDIIP) traverse the membrane as a helical; Signal-anchor for type II membrane protein segment. The Lumenal portion of the chain corresponds to 23 to 740 (REVLFQDPKY…VMNRIFPVQG (718 aa)). 3 N-linked (GlcNAc...) asparagine glycosylation sites follow: asparagine 108, asparagine 308, and asparagine 506. Active-site charge relay system residues include serine 516, aspartate 604, and histidine 636. Cysteine 535 and cysteine 658 are disulfide-bonded. Residue asparagine 672 is glycosylated (N-linked (GlcNAc...) asparagine).

The protein belongs to the peptidase S9B family. DPPIV subfamily.

It is found in the cell membrane. Functionally, removes N-terminal dipeptides sequentially from polypeptides. Essential for control of distal tip cell migration. This Caenorhabditis elegans protein is Dipeptidyl peptidase family member 6 (dpf-6).